Reading from the N-terminus, the 353-residue chain is Quinolinate synthase (353 aa).

Positions 47 and 68 each coordinate iminosuccinate. Residue cysteine 113 participates in [4Fe-4S] cluster binding. Residues 139–141 (YAN) and serine 156 contribute to the iminosuccinate site. Cysteine 200 is a binding site for [4Fe-4S] cluster. Iminosuccinate is bound by residues 226–228 (HPE) and threonine 243. Cysteine 297 is a [4Fe-4S] cluster binding site.

Belongs to the quinolinate synthase family. Type 1 subfamily. The cofactor is [4Fe-4S] cluster.

The protein resides in the cytoplasm. It carries out the reaction iminosuccinate + dihydroxyacetone phosphate = quinolinate + phosphate + 2 H2O + H(+). It participates in cofactor biosynthesis; NAD(+) biosynthesis; quinolinate from iminoaspartate: step 1/1. Functionally, catalyzes the condensation of iminoaspartate with dihydroxyacetone phosphate to form quinolinate. In Vibrio campbellii (strain ATCC BAA-1116), this protein is Quinolinate synthase.